The following is a 378-amino-acid chain: Quinolinate synthase (378 aa).

Residues His59 and Ser80 each coordinate iminosuccinate. Cys125 serves as a coordination point for [4Fe-4S] cluster. Iminosuccinate-binding positions include 151–153 (YAN) and Ser168. Cys212 is a binding site for [4Fe-4S] cluster. Residues 238–240 (HPE) and Thr255 contribute to the iminosuccinate site. Cys309 contributes to the [4Fe-4S] cluster binding site.

The protein belongs to the quinolinate synthase family. Type 1 subfamily. [4Fe-4S] cluster serves as cofactor.

The protein resides in the cytoplasm. The catalysed reaction is iminosuccinate + dihydroxyacetone phosphate = quinolinate + phosphate + 2 H2O + H(+). It functions in the pathway cofactor biosynthesis; NAD(+) biosynthesis; quinolinate from iminoaspartate: step 1/1. Catalyzes the condensation of iminoaspartate with dihydroxyacetone phosphate to form quinolinate. The chain is Quinolinate synthase from Burkholderia cenocepacia (strain HI2424).